Consider the following 317-residue polypeptide: MVELSDYQRQEKVGEGTYGVVYKALDTKHNNRVVALKKIRLESEDEGVPSTAIREISLLKEMKDDNIVRLYDIIHSDSHKLYLVFEFLDLDLKKYMESIPQGVGLGANMIKRFMNQLIRGIKHCHSHRVLHRDLKPQNLLIDKEGNLKLADFGLARAFGVPLRAYTHEVVTLWYRAPEILLGGKQYSTGVDMWSVGCIFAEMCNRKPLFPGDSEIDEIFRIFRILGTPNEEIWPDVNYLPDFKSSFPQWKKKPLSEAVPSLDANGIDLLDQMLVYDPSRRISAKRALIHPYFNDNDDRDHNNYNEDNIGIDKHQNMQ.

The Protein kinase domain maps to 7–292; the sequence is YQRQEKVGEG…AKRALIHPYF (286 aa). ATP contacts are provided by residues 13–21 and lysine 37; that span reads VGEGTYGVV. Threonine 17 is subject to Phosphothreonine. Tyrosine 18 carries the phosphotyrosine; by SWE1 modification. Residue aspartate 133 is the Proton acceptor of the active site. Residue threonine 166 is modified to Phosphothreonine; by CAK. The interval 296-317 is disordered; that stretch reads DDRDHNNYNEDNIGIDKHQNMQ.

The protein belongs to the protein kinase superfamily. CMGC Ser/Thr protein kinase family. CDC2/CDKX subfamily. In terms of assembly, forms several complexes with cyclins CCN1, CLB2, CLN3, and HGC1. The CDC28-CCN1 complex associates with septin CDC11 upon hyphal induction. Interacts with IQG1, RFA2, and HSP90. Phosphorylated at Tyr-18 by SWE1 in a cell cycle-dependent manner. Yeast-form and hyphal cells display similar dynamics of phosphorylation and dephosphorylation of Tyr-18. Tyr-18 phosphorylation leads to inhibition of CDC28 kinase activity.

It carries out the reaction L-seryl-[protein] + ATP = O-phospho-L-seryl-[protein] + ADP + H(+). The catalysed reaction is L-threonyl-[protein] + ATP = O-phospho-L-threonyl-[protein] + ADP + H(+). Phosphorylation at Thr-17 or Tyr-18 inactivates the enzyme, while phosphorylation at Thr-166 activates it. Cyclin-dependent kinase that acts as a master regulator of the mitotic and meiotic cell cycles. May drive the G1-S transition. Plays a role in mitotic exit. Plays a role in the expression of morphology-related transcription factors, and especially hyphae-specific genes. Binds distinct cyclin subunits as cells progress through the division cycle or flamentous growth. The CDC28-CLB2 complex regulates cytokinesis partly by phosphorylating the actomyosin ring component IQG1. The CDC28-CLN3 complex phosphorylates SLA1 which regulates cortical actin patch dynamics. The CDC28-CCN1 complex phosphorylates CDC11 and SEC2 upon induction of filamentous growth. The CDC28-HGC1 complex also phosphorylates SEC2 and maintains CDC11 phosphorylation throughout hyphal growth. Moreover, the CDC28-HGC1 complex phosphorylates and prevents RGA2 from localizing to hyphal tips, leading to localized CDC42 activation for hyphal extension. CDC28-HGC1 phosphorylation of EFG1 represses cell separation genes during hyphal growth. Additional substrates for CDC28 are RFA2 in G1-phase; MOB2, which is required for the maintenance of polarisome components and for inhibition of cell separation in hyphae; and GIN4 to regulate its association to SEP7 and subsequent septin ring assembly. This chain is Cyclin-dependent kinase 1, found in Candida albicans (strain SC5314 / ATCC MYA-2876) (Yeast).